Consider the following 213-residue polypeptide: TVP38/TMEM64 family membrane protein YtxB (213 aa).

The next 6 helical transmembrane spans lie at 9–29, 34–54, 58–78, 81–101, 159–179, and 181–201; these read WLAVLAGAGLLYWGNKTYLNV, IRVWVLSFGVFAPLMFIGISI, LVLFPVSVISIAGGLAFGPLL, LYTLFGSMCASAVSFFAAGLF, AVGIIPGTIALNVLGASFLAG, and LPAFFMVLALYIVFISLPFIF.

This sequence belongs to the TVP38/TMEM64 family.

It is found in the cell membrane. This Bacillus subtilis (strain 168) protein is TVP38/TMEM64 family membrane protein YtxB (ytxB).